The chain runs to 286 residues: Pyridoxal kinase PdxY (286 aa).

Substrate contacts are provided by residues Ser9 and 44 to 45 (TQ). Residues Asp111, Ala143, Glu148, Lys181, and 208 to 211 (RPLV) contribute to the ATP site. Asp222 provides a ligand contact to substrate.

This sequence belongs to the pyridoxine kinase family. PdxY subfamily. In terms of assembly, homodimer. Mg(2+) serves as cofactor.

The catalysed reaction is pyridoxal + ATP = pyridoxal 5'-phosphate + ADP + H(+). Its pathway is cofactor metabolism; pyridoxal 5'-phosphate salvage; pyridoxal 5'-phosphate from pyridoxal: step 1/1. Pyridoxal kinase involved in the salvage pathway of pyridoxal 5'-phosphate (PLP). Catalyzes the phosphorylation of pyridoxal to PLP. This is Pyridoxal kinase PdxY from Pectobacterium atrosepticum (strain SCRI 1043 / ATCC BAA-672) (Erwinia carotovora subsp. atroseptica).